A 158-amino-acid chain; its full sequence is NAD(P)H-quinone oxidoreductase subunit N, organellar chromatophore (158 aa).

It belongs to the complex I NdhN subunit family. As to quaternary structure, NDH-1 can be composed of about 15 different subunits; different subcomplexes with different compositions have been identified which probably have different functions.

It is found in the plastid. It localises to the organellar chromatophore thylakoid membrane. It catalyses the reaction a plastoquinone + NADH + (n+1) H(+)(in) = a plastoquinol + NAD(+) + n H(+)(out). It carries out the reaction a plastoquinone + NADPH + (n+1) H(+)(in) = a plastoquinol + NADP(+) + n H(+)(out). In terms of biological role, NDH-1 shuttles electrons from an unknown electron donor, via FMN and iron-sulfur (Fe-S) centers, to quinones in the respiratory and/or the photosynthetic chain. The immediate electron acceptor for the enzyme in this species is believed to be plastoquinone. Couples the redox reaction to proton translocation, and thus conserves the redox energy in a proton gradient. This chain is NAD(P)H-quinone oxidoreductase subunit N, organellar chromatophore, found in Paulinella chromatophora.